We begin with the raw amino-acid sequence, 280 residues long: Protoheme IX farnesyltransferase (280 aa).

9 helical membrane passes run 2–21 (VVAT…RAGL), 30–50 (AAVP…VVSG), 83–103 (LALW…LVGV), 105–125 (ATTG…YTPL), 131–151 (LSLP…WTSV), 160–180 (FLLF…ISLF), 206–226 (IVGY…LGVA), 229–249 (VYLG…VYGL), and 260–280 (QVFF…MIGA).

This sequence belongs to the UbiA prenyltransferase family. Protoheme IX farnesyltransferase subfamily.

The protein resides in the cell inner membrane. It catalyses the reaction heme b + (2E,6E)-farnesyl diphosphate + H2O = Fe(II)-heme o + diphosphate. Its pathway is porphyrin-containing compound metabolism; heme O biosynthesis; heme O from protoheme: step 1/1. Its function is as follows. Converts heme B (protoheme IX) to heme O by substitution of the vinyl group on carbon 2 of heme B porphyrin ring with a hydroxyethyl farnesyl side group. The chain is Protoheme IX farnesyltransferase from Sorangium cellulosum (strain So ce56) (Polyangium cellulosum (strain So ce56)).